A 330-amino-acid polypeptide reads, in one-letter code: Beta-ketoacyl-[acyl-carrier-protein] synthase III (330 aa).

Active-site residues include C116 and H257. Residues 258–262 (QANQR) are ACP-binding. The active site involves N287.

This sequence belongs to the thiolase-like superfamily. FabH family. As to quaternary structure, homodimer.

The protein resides in the cytoplasm. It carries out the reaction malonyl-[ACP] + acetyl-CoA + H(+) = 3-oxobutanoyl-[ACP] + CO2 + CoA. The protein operates within lipid metabolism; fatty acid biosynthesis. Its function is as follows. Catalyzes the condensation reaction of fatty acid synthesis by the addition to an acyl acceptor of two carbons from malonyl-ACP. Catalyzes the first condensation reaction which initiates fatty acid synthesis and may therefore play a role in governing the total rate of fatty acid production. Possesses both acetoacetyl-ACP synthase and acetyl transacylase activities. Its substrate specificity determines the biosynthesis of branched-chain and/or straight-chain of fatty acids. This chain is Beta-ketoacyl-[acyl-carrier-protein] synthase III, found in Synechocystis sp. (strain ATCC 27184 / PCC 6803 / Kazusa).